A 354-amino-acid polypeptide reads, in one-letter code: Probable protein phosphatase 2C 69 (354 aa).

In terms of domain architecture, PPM-type phosphatase spans 33–279 (SYGYASSAGK…DNITCVVVRF (247 aa)). Mn(2+) contacts are provided by D69, G70, D231, and D270. The segment at 289-354 (HISSSSSKEA…LERNSVTDKV (66 aa)) is disordered. Polar residues-rich tracts occupy residues 309–328 (ISSN…PENV) and 336–348 (ASRS…LERN).

It belongs to the PP2C family. Mg(2+) serves as cofactor. The cofactor is Mn(2+).

The catalysed reaction is O-phospho-L-seryl-[protein] + H2O = L-seryl-[protein] + phosphate. It carries out the reaction O-phospho-L-threonyl-[protein] + H2O = L-threonyl-[protein] + phosphate. The chain is Probable protein phosphatase 2C 69 from Arabidopsis thaliana (Mouse-ear cress).